A 359-amino-acid polypeptide reads, in one-letter code: Flavonoid 8-O-methyltransferase 1 (359 aa).

Residue Asp-223 coordinates S-adenosyl-L-methionine. His-261 functions as the Proton acceptor in the catalytic mechanism.

It belongs to the class I-like SAM-binding methyltransferase superfamily. Cation-independent O-methyltransferase family. Expressed in leaves and trichomes, especially in cv. SD and cv. EMX-1, but barely in cv. MC and cv. SW.

It catalyses the reaction an 8-hydroxyflavone + S-adenosyl-L-methionine = an 8-methoxyflavone + S-adenosyl-L-homocysteine + H(+). The catalysed reaction is 4',7,8-trihydroxyflavone + S-adenosyl-L-methionine = 4',7-dihydroxy-8-methoxyflavone + S-adenosyl-L-homocysteine + H(+). It carries out the reaction 7,8-dihydroxyflavone + S-adenosyl-L-methionine = 7-hydroxy-8-methoxyflavone + S-adenosyl-L-homocysteine + H(+). The enzyme catalyses 3',4',7,8-tetrahydroxyflavone + S-adenosyl-L-methionine = 3',4,7-trihydroxy-8-methoxyflavone + S-adenosyl-L-homocysteine + H(+). The protein operates within flavonoid metabolism. With respect to regulation, strongly inhibited by gardenin B (GARD B). Its function is as follows. Cation-independent flavonoid 8-O-methyltransferase involved in the biosynthesis of polymethoxylated flavonoids natural products such as nevadensin and salvigenin, aroma compounds which contribute to the flavor of sweet basil, and exhibit pharmacological activities such as anti-allergic, anti-oxidant, antibacterial, anti-proliferative, and anti-inflammatory effects. Catalyzes S-adenosylmethionine-dependent regioselective 8-O-methylation of flavonoids; mediates likely the conversion of pilosin (PIL) to nevadensin (NEV) and of 8-hydroxysalvigenin (8-OH-SALV) to gardenin B (GARD B). Can also use 3',4',7,8-tetrahydroxyflavone as substrate. Accepts other unnatural O-diphenols including 7,8,4'-trihydroxy-flavone and 7-O-methyl-8-hydroxy-flavone, and, with a lower efficiency, 7,8-dihydroxy-flavone, as substrates. In Ocimum basilicum (Sweet basil), this protein is Flavonoid 8-O-methyltransferase 1.